Consider the following 239-residue polypeptide: Probable transcriptional regulatory protein CD630_07950 (239 aa).

This sequence belongs to the TACO1 family.

Its subcellular location is the cytoplasm. The sequence is that of Probable transcriptional regulatory protein CD630_07950 from Clostridioides difficile (strain 630) (Peptoclostridium difficile).